A 1077-amino-acid chain; its full sequence is Teashirt homolog 1 (1077 aa).

Disordered stretches follow at residues 1–109, 139–195, and 269–298; these read MPRR…VSYP, SGST…SSSS, and GHYR…MEME. Over residues 26–36 the composition is skewed to acidic residues; that stretch reads IDEEHVEDDGL. Composition is skewed to polar residues over residues 57 to 71 and 139 to 152; these read QSYQ…TNQD and SGST…SQKE. Residues 164 to 195 are compositionally biased toward low complexity; it reads PVSTTGPTTSTPSTSCSSSTSHSSTTSTSSSS. 2 C2H2-type zinc fingers span residues 246 to 270 and 307 to 331; these read FRCK…ETGH and LKCM…KTKH. A compositionally biased stretch (basic and acidic residues) spans 269 to 284; sequence GHYRDDNRDKDSEKTK. A C2H2-type 3; atypical zinc finger spans residues 416-440; sequence LKCMECGSSHDTLQQLTAHMMVTGH. Disordered stretches follow at residues 467–549 and 647–720; these read SIPL…KGGL and TGKV…EPLK. Basic and acidic residues-rich tracts occupy residues 496-528, 647-665, and 675-708; these read SEEK…EKFE, TGKV…EKSS, and KENK…EGPL. Phosphoserine is present on serine 765. The disordered stretch occupies residues 848 to 873; it reads TGRLTPKSSTPSTVSEKSDADGSSFE. A compositionally biased stretch (polar residues) spans 853-862; the sequence is PKSSTPSTVS. The segment at residues 885–955 is a DNA-binding region (homeobox; atypical); the sequence is RKGRQSNWNP…NVKYQLRRTG (71 aa). 2 C2H2-type zinc fingers span residues 970–992 and 1037–1060; these read FFCN…LETH and FQCK…SKTH.

The protein belongs to the teashirt C2H2-type zinc-finger protein family. In terms of assembly, interacts (via homeobox domain) with APBB1 (via PID domain 1). In terms of tissue distribution, expressed in brain; strongly reduced in post-mortem elderly subjects with Alzheimer disease.

The protein localises to the nucleus. In terms of biological role, probable transcriptional regulator involved in developmental processes. May act as a transcriptional repressor (Potential). This chain is Teashirt homolog 1 (TSHZ1), found in Homo sapiens (Human).